We begin with the raw amino-acid sequence, 316 residues long: MTSKNSIQKALYLAFERLQWSELRDSVPLTLSEQDLENLRGINEKISLSEVTDIYLPLSRLLNLIVKAKQQRGLVVDEFLGQKPSRSPYIISIAGSVAVGKSTTARILQALLRHWPEHPKVDLVTTDGFLYPLADLKRKGLLQRKGFPESYDMKMLVEFISAVKSGQPHVKAPIYSHVTYDRVKNQHQTVSQPDILILEGLNVLQTGLDSPVDTRRPFVSDFVDFSIYVDAEEPLLKQWYKERFLQFRSGAFSDKKSYFHHYSTLTDDEANTIAANIWDTINGPNLQLNIQPTRERAHLILQKGQDHLMSHVLMRK.

95–102 (GSVAVGKS) is a binding site for ATP.

This sequence belongs to the prokaryotic pantothenate kinase family.

The protein resides in the cytoplasm. The enzyme catalyses (R)-pantothenate + ATP = (R)-4'-phosphopantothenate + ADP + H(+). Its pathway is cofactor biosynthesis; coenzyme A biosynthesis; CoA from (R)-pantothenate: step 1/5. In Shewanella baltica (strain OS195), this protein is Pantothenate kinase.